A 322-amino-acid polypeptide reads, in one-letter code: Formimidoylglutamase (322 aa).

The Mn(2+) site is built by His127, Asp163, His165, Asp167, Asp254, and Asp256.

Belongs to the arginase family. Mn(2+) serves as cofactor.

The enzyme catalyses N-formimidoyl-L-glutamate + H2O = formamide + L-glutamate. It participates in amino-acid degradation; L-histidine degradation into L-glutamate; L-glutamate from N-formimidoyl-L-glutamate (hydrolase route): step 1/1. Its function is as follows. Catalyzes the conversion of N-formimidoyl-L-glutamate to L-glutamate and formamide. This chain is Formimidoylglutamase, found in Paraburkholderia xenovorans (strain LB400).